A 205-amino-acid chain; its full sequence is Small ribosomal subunit protein uS4 (205 aa).

A compositionally biased stretch (basic and acidic residues) spans 1–16 (MSKRETTKYKIDRRMG). Residues 1–46 (MSKRETTKYKIDRRMGENIWGRPKSPVNRRDYGPGQHGQRRKGKLS) are disordered. One can recognise an S4 RNA-binding domain in the interval 94-157 (SRLDAVVYRA…KQLVLVLESV (64 aa)).

The protein belongs to the universal ribosomal protein uS4 family. In terms of assembly, part of the 30S ribosomal subunit. Contacts protein S5. The interaction surface between S4 and S5 is involved in control of translational fidelity.

In terms of biological role, one of the primary rRNA binding proteins, it binds directly to 16S rRNA where it nucleates assembly of the body of the 30S subunit. Functionally, with S5 and S12 plays an important role in translational accuracy. In Bartonella tribocorum (strain CIP 105476 / IBS 506), this protein is Small ribosomal subunit protein uS4.